We begin with the raw amino-acid sequence, 267 residues long: Diphthine synthase (267 aa).

S-adenosyl-L-methionine-binding positions include Leu9, Asp87, Ile90, 115–116 (SI), Leu166, Leu205, and His230.

Belongs to the diphthine synthase family. Homodimer.

The catalysed reaction is 2-[(3S)-amino-3-carboxypropyl]-L-histidyl-[translation elongation factor 2] + 3 S-adenosyl-L-methionine = diphthine-[translation elongation factor 2] + 3 S-adenosyl-L-homocysteine + 3 H(+). It participates in protein modification; peptidyl-diphthamide biosynthesis. In terms of biological role, S-adenosyl-L-methionine-dependent methyltransferase that catalyzes the trimethylation of the amino group of the modified target histidine residue in translation elongation factor 2 (EF-2), to form an intermediate called diphthine. The three successive methylation reactions represent the second step of diphthamide biosynthesis. The sequence is that of Diphthine synthase from Staphylothermus marinus (strain ATCC 43588 / DSM 3639 / JCM 9404 / F1).